Consider the following 484-residue polypeptide: Glycogen synthase (484 aa).

Lysine 15 is a binding site for ADP-alpha-D-glucose.

This sequence belongs to the glycosyltransferase 1 family. Bacterial/plant glycogen synthase subfamily.

The enzyme catalyses [(1-&gt;4)-alpha-D-glucosyl](n) + ADP-alpha-D-glucose = [(1-&gt;4)-alpha-D-glucosyl](n+1) + ADP + H(+). The protein operates within glycan biosynthesis; glycogen biosynthesis. Synthesizes alpha-1,4-glucan chains using ADP-glucose. This Anoxybacillus flavithermus (strain DSM 21510 / WK1) protein is Glycogen synthase.